The following is a 472-amino-acid chain: Cannabinoid receptor 1 (472 aa).

Residues 1-116 are Extracellular-facing; that stretch reads MKSILDGLAD…CFMILNPSQQ (116 aa). A required for mitochondrial localization region spans residues 2 to 23; sequence KSILDGLADTTFRTITTDLLYV. 2 N-linked (GlcNAc...) asparagine glycosylation sites follow: Asn-77 and Asn-83. Residues 117–142 traverse the membrane as a helical segment; that stretch reads LAIAVLSLTLGTFTVLENLLVLCVIL. Residues 143 to 154 lie on the Cytoplasmic side of the membrane; it reads HSRSLRCRPSYH. The chain crosses the membrane as a helical span at residues 155–175; the sequence is FIGSLAVADLLGSVIFVYSFV. The Extracellular portion of the chain corresponds to 176–187; that stretch reads DFHVFHRKDSPN. Residues 188–212 traverse the membrane as a helical segment; it reads VFLFKLGGVTASFTASVGSLFLTAI. Topologically, residues 213–232 are cytoplasmic; that stretch reads DRYISIHRPLAYKKIVTRPK. Residues 233–255 form a helical membrane-spanning segment; the sequence is AVVAFCLMWTIAIVIAVLPLLGW. The Extracellular portion of the chain corresponds to 256–273; the sequence is NCKKLQSVCSDIFPLIDE. A helical transmembrane segment spans residues 274–299; that stretch reads TYLMFWIGVTSVLLLFIVYAYMYILW. Over 300 to 344 the chain is Cytoplasmic; the sequence is KAHIHAVRMIQRGTQKSIIIHTSEDGKVQVTRPDQARMDIRLAKT. Residues 345–365 form a helical membrane-spanning segment; the sequence is LVLILVVLIICWGPLLAIMVY. Residues 366–377 are Extracellular-facing; it reads DVFGKMNKLIKT. The helical transmembrane segment at 378–399 threads the bilayer; the sequence is VFAFCSMLCLLNSTVNPIIYAL. At 400 to 472 the chain is on the cytoplasmic side; the sequence is RSKDLRHAFR…VSTNTSAKAL (73 aa). Residue Cys-415 is the site of S-palmitoyl cysteine attachment. A phosphoserine mark is found at Ser-425 and Ser-429.

The protein belongs to the G-protein coupled receptor 1 family. Interacts (via C-terminus) with CNRIP1; this interaction attenuates constitutive, but not agonist-dependent, inhibition of voltage-gated Ca(2+) channels in neurons. Associates with G protein alpha subunits, including G(i) alpha-1/GNAI1, G(i) alpha-3/GNAI3 and G(o)-alpha/GNAO1; palmitoylation is important for interaction with GNAI3 and GNAO1. Post-translationally, palmitoylation at Cys-415 is important for recruitment at plasma membrane and lipid rafts and association with G protein alpha subunits. Expressed in cerebral arterial muscle cells and cerebral cortex (at protein level).

The protein localises to the cell membrane. It localises to the membrane raft. It is found in the mitochondrion outer membrane. The protein resides in the cell projection. Its subcellular location is the axon. The protein localises to the presynapse. Hemopressin, a peptide derived from hemoglobin subunit alpha (HBA1 and/or HBA2), acts as an antagonist peptide: hemopressin-binding efficiently blocks cannabinoid receptor CNR1 and subsequent signaling. G-protein coupled receptor for endogenous cannabinoids (eCBs), including N-arachidonoylethanolamide (also called anandamide or AEA) and 2-arachidonoylglycerol (2-AG), as well as phytocannabinoids, such as delta(9)-tetrahydrocannabinol (THC). Mediates many cannabinoid-induced effects, acting, among others, on food intake, memory loss, gastrointestinal motility, catalepsy, ambulatory activity, anxiety, chronic pain. Signaling typically involves reduction in cyclic AMP. In the hypothalamus, may have a dual effect on mitochondrial respiration depending upon the agonist dose and possibly upon the cell type. Increases respiration at low doses, while decreases respiration at high doses. At high doses, CNR1 signal transduction involves G-protein alpha-i protein activation and subsequent inhibition of mitochondrial soluble adenylate cyclase, decrease in cyclic AMP concentration, inhibition of protein kinase A (PKA)-dependent phosphorylation of specific subunits of the mitochondrial electron transport system, including NDUFS2. In the hypothalamus, inhibits leptin-induced reactive oxygen species (ROS) formation and mediates cannabinoid-induced increase in SREBF1 and FASN gene expression. In response to cannabinoids, drives the release of orexigenic beta-endorphin, not that of melanocyte-stimulating hormone alpha/alpha-MSH, from hypothalamic POMC neurons, hence promoting food intake. In the hippocampus, regulates cellular respiration and energy production in response to cannabinoids. Involved in cannabinoid-dependent depolarization-induced suppression of inhibition (DSI), a process in which depolarization of CA1 postsynaptic pyramidal neurons mobilizes eCBs, which retrogradely activate presynaptic CB1 receptors, transiently decreasing GABAergic inhibitory neurotransmission. Also reduces excitatory synaptic transmission. In superior cervical ganglions and cerebral vascular smooth muscle cells, inhibits voltage-gated Ca(2+) channels in a constitutive, as well as agonist-dependent manner. In cerebral vascular smooth muscle cells, inhibition of voltage-gated Ca(2+) channels leads to vasodilation and decrease in vascular tone. Induces leptin production in adipocytes and reduces LRP2-mediated leptin clearance in the kidney, hence participating in hyperleptinemia. In adipose tissue, CNR1 signaling leads to increased expression of SREBF1, ACACA and FASN genes. In the liver, activation by endocannabinoids leads to increased de novo lipogenesis and reduced fatty acid catabolism, associated with increased expression of SREBF1/SREBP-1, GCK, ACACA, ACACB and FASN genes. May also affect de novo cholesterol synthesis and HDL-cholesteryl ether uptake. Peripherally modulates energy metabolism. In high carbohydrate diet-induced obesity, may decrease the expression of mitochondrial dihydrolipoyl dehydrogenase/DLD in striated muscles, as well as that of selected glucose/ pyruvate metabolic enzymes, hence affecting energy expenditure through mitochondrial metabolism. In response to cannabinoid anandamide, elicits a pro-inflammatory response in macrophages, which involves NLRP3 inflammasome activation and IL1B and IL18 secretion. In macrophages infiltrating pancreatic islets, this process may participate in the progression of type-2 diabetes and associated loss of pancreatic beta-cells. This chain is Cannabinoid receptor 1 (CNR1), found in Felis catus (Cat).